Consider the following 331-residue polypeptide: Beta-ketoacyl-[acyl-carrier-protein] synthase III (331 aa).

Residues C115 and H255 contribute to the active site. Residues 256 to 260 (QANFR) are ACP-binding. N285 is an active-site residue.

The protein belongs to the thiolase-like superfamily. FabH family. Homodimer.

The protein resides in the cytoplasm. It carries out the reaction malonyl-[ACP] + acetyl-CoA + H(+) = 3-oxobutanoyl-[ACP] + CO2 + CoA. Its pathway is lipid metabolism; fatty acid biosynthesis. Its function is as follows. Catalyzes the condensation reaction of fatty acid synthesis by the addition to an acyl acceptor of two carbons from malonyl-ACP. Catalyzes the first condensation reaction which initiates fatty acid synthesis and may therefore play a role in governing the total rate of fatty acid production. Possesses both acetoacetyl-ACP synthase and acetyl transacylase activities. Its substrate specificity determines the biosynthesis of branched-chain and/or straight-chain of fatty acids. This Helicobacter pylori (strain ATCC 700392 / 26695) (Campylobacter pylori) protein is Beta-ketoacyl-[acyl-carrier-protein] synthase III.